The sequence spans 538 residues: MFSLFHHPQLRPRHYAGGVVVISFIILFYGGALSSIFALGGELQWRAWFTDDYLQHLILFSFGQALLSTVLSIFFGLLLARALFYKPFLGKKWLLKLMSLTFVLPALVVIFGLIGIYGSSGWLAWLANLFGMSWQGHIYGLSGILIAHLFFNIPLAAQLFLQSLQSIPYQQRQLAAQLNLQGWQFVKLVEWPVFRQQCLPTFSLIFMLCFTSFTVVLTLGGGPQYTTLETAIYQAILFEFDLPKAALFAMLQFVFCLILFSLTSRFSLSNQNGLSNSNIWFEKPKSAVKIFHILVLLVFVFFLFSPVLNILISALSSSNLLTVWHNSQLWRALGYSLSIAPLSALLALTMAIALLLLSRRLEWLHYQKISQFIINAGMVILAIPILVLAMGLFLLLQDRDFSNIDLFIIVVFCNALSAMPFVLRILSAPFHNNMRYYENLCNSLGIVGWQRFYLIEWKTLRAPLRYAFALGLALSLGDFTAIALFGNQEFTSLPHLLYQQLGNYRNQDAAVTAGILLLLCGILFAFIHTYRDADDLSK.

12 consecutive transmembrane segments (helical) span residues 19 to 39, 57 to 77, 97 to 117, 141 to 161, 202 to 222, 242 to 262, 293 to 313, 337 to 357, 376 to 396, 406 to 426, 466 to 486, and 509 to 529; these read VVVI…IFAL, LILF…FFGL, LMSL…IGIY, LSGI…QLFL, FSLI…LGGG, LPKA…LFSL, ILVL…ILIS, LSIA…LLLL, AGMV…FLLL, LFII…LRIL, YAFA…ALFG, and AAVT…FIHT. One can recognise an ABC transmembrane type-1 1 domain in the interval 58–263; the sequence is ILFSFGQALL…VFCLILFSLT (206 aa). The region spanning 333–528 is the ABC transmembrane type-1 2 domain; sequence LGYSLSIAPL…LCGILFAFIH (196 aa).

Belongs to the binding-protein-dependent transport system permease family. CysTW subfamily. As to quaternary structure, the complex is composed of two ATP-binding proteins (ThiQ), two transmembrane proteins (ThiP) and a solute-binding protein (ThiB).

The protein resides in the cell inner membrane. Part of the ABC transporter complex ThiBPQ involved in thiamine import. Probably responsible for the translocation of the substrate across the membrane. This Haemophilus influenzae (strain ATCC 51907 / DSM 11121 / KW20 / Rd) protein is Thiamine transport system permease protein ThiP (thiP).